An 822-amino-acid polypeptide reads, in one-letter code: AP-1 complex subunit gamma-1 (822 aa).

A compositionally biased stretch (polar residues) spans 593-604 (NGPSEIVQTNGE). The segment at 593 to 627 (NGPSEIVQTNGETEPAPLETKPPPSGPQPTSQAND) is disordered. In terms of domain architecture, GAE spans 702–817 (PGIPSITAYS…QDLAEVNNFP (116 aa)).

The protein belongs to the adaptor complexes large subunit family. In terms of assembly, adaptor protein complex 1 (AP-1) is a heterotetramer composed of two large adaptins (gamma-type subunit AP1G1 and beta-type subunit AP1B1), a medium adaptin (mu-type subunit AP1M1 or AP1M2) and a small adaptin (sigma-type subunit AP1S1 or AP1S2 or AP1S3). Interacts (via GAE domain) with RABEP1. Interacts with EPS15. Interacts with SYNRG/gamma-synergin. Interacts (via GAE domain) with AP1AR (via coiled-coil domain). Interacts with CLN3 (via dileucine motif); this interaction facilitates lysosomal targeting. Interacts (via GAE domain) with AFTPH/aftiphilin; the interaction is required to recruit AFTPH/aftiphilin to the perinuclear region of the cell. As to expression, widely expressed.

The protein resides in the golgi apparatus. Its subcellular location is the cytoplasmic vesicle. The protein localises to the clathrin-coated vesicle membrane. It is found in the cytoplasm. It localises to the perinuclear region. The protein resides in the clathrin-coated vesicle. Its subcellular location is the membrane. The protein localises to the clathrin-coated pit. In terms of biological role, subunit of clathrin-associated adaptor protein complex 1 that plays a role in protein sorting in the late-Golgi/trans-Golgi network (TGN) and/or endosomes. The AP complexes mediate both the recruitment of clathrin to membranes and the recognition of sorting signals within the cytosolic tails of transmembrane cargo molecules. In association with AFTPH/aftiphilin in the aftiphilin/p200/gamma-synergin complex, involved in the trafficking of transferrin from early to recycling endosomes, and the membrane trafficking of furin and the lysosomal enzyme cathepsin D between the trans-Golgi network (TGN) and endosomes. This Mus musculus (Mouse) protein is AP-1 complex subunit gamma-1 (Ap1g1).